The sequence spans 227 residues: Ribose-5-phosphate isomerase A (227 aa).

Residues 26-29 (TGST), 82-85 (DGAD), and 95-98 (KGGG) each bind substrate. Residue E104 is the Proton acceptor of the active site. K122 lines the substrate pocket.

This sequence belongs to the ribose 5-phosphate isomerase family. In terms of assembly, homodimer.

It carries out the reaction aldehydo-D-ribose 5-phosphate = D-ribulose 5-phosphate. Its pathway is carbohydrate degradation; pentose phosphate pathway; D-ribose 5-phosphate from D-ribulose 5-phosphate (non-oxidative stage): step 1/1. In terms of biological role, catalyzes the reversible conversion of ribose-5-phosphate to ribulose 5-phosphate. In Streptococcus pneumoniae serotype 4 (strain ATCC BAA-334 / TIGR4), this protein is Ribose-5-phosphate isomerase A.